A 268-amino-acid chain; its full sequence is Tryptophan synthase alpha chain (268 aa).

Residues glutamate 49 and aspartate 60 each act as proton acceptor in the active site.

The protein belongs to the TrpA family. As to quaternary structure, tetramer of two alpha and two beta chains.

It catalyses the reaction (1S,2R)-1-C-(indol-3-yl)glycerol 3-phosphate + L-serine = D-glyceraldehyde 3-phosphate + L-tryptophan + H2O. It functions in the pathway amino-acid biosynthesis; L-tryptophan biosynthesis; L-tryptophan from chorismate: step 5/5. Its function is as follows. The alpha subunit is responsible for the aldol cleavage of indoleglycerol phosphate to indole and glyceraldehyde 3-phosphate. This chain is Tryptophan synthase alpha chain, found in Xylella fastidiosa (strain M23).